Consider the following 236-residue polypeptide: Uridylate kinase (236 aa).

10 to 13 is an ATP binding site; sequence KLSG. Gly-52 provides a ligand contact to UMP. ATP-binding residues include Gly-53 and Arg-57. Residues Asp-72 and 133–140 contribute to the UMP site; that span reads TGNPFFTT. Thr-160, Tyr-166, and Asp-169 together coordinate ATP.

It belongs to the UMP kinase family. Homohexamer.

It is found in the cytoplasm. It carries out the reaction UMP + ATP = UDP + ADP. The protein operates within pyrimidine metabolism; CTP biosynthesis via de novo pathway; UDP from UMP (UMPK route): step 1/1. Inhibited by UTP. Functionally, catalyzes the reversible phosphorylation of UMP to UDP. The protein is Uridylate kinase of Parabacteroides distasonis (strain ATCC 8503 / DSM 20701 / CIP 104284 / JCM 5825 / NCTC 11152).